Reading from the N-terminus, the 257-residue chain is Diphthine synthase (257 aa).

S-adenosyl-L-methionine-binding positions include leucine 9, aspartate 85, valine 88, 113–114 (SI), leucine 164, alanine 209, and histidine 234.

Belongs to the diphthine synthase family. Homodimer.

It carries out the reaction 2-[(3S)-amino-3-carboxypropyl]-L-histidyl-[translation elongation factor 2] + 3 S-adenosyl-L-methionine = diphthine-[translation elongation factor 2] + 3 S-adenosyl-L-homocysteine + 3 H(+). It participates in protein modification; peptidyl-diphthamide biosynthesis. Functionally, S-adenosyl-L-methionine-dependent methyltransferase that catalyzes the trimethylation of the amino group of the modified target histidine residue in translation elongation factor 2 (EF-2), to form an intermediate called diphthine. The three successive methylation reactions represent the second step of diphthamide biosynthesis. In Methanocaldococcus jannaschii (strain ATCC 43067 / DSM 2661 / JAL-1 / JCM 10045 / NBRC 100440) (Methanococcus jannaschii), this protein is Diphthine synthase.